The primary structure comprises 315 residues: NAD-dependent protein deacylase sirtuin-5, mitochondrial (315 aa).

The N-terminal 39 residues, Met-1–Pro-39, are a transit peptide targeting the mitochondrion. Residues Ser-40–Glu-312 form the Deacetylase sirtuin-type domain. Gly-61–Trp-80 contacts NAD(+). Substrate contacts are provided by Tyr-105 and Arg-108. An NAD(+)-binding site is contributed by Gln-143 to Asp-146. His-161 functions as the Proton acceptor in the catalytic mechanism. NAD(+) is bound by residues Gly-254–Ser-256, Asn-280–Val-282, and Cys-298.

It belongs to the sirtuin family. Class III subfamily. Monomer. Homodimer. Interacts with CPS1.

The protein localises to the mitochondrion. It is found in the cytoplasm. The protein resides in the cytosol. Its subcellular location is the nucleus. It catalyses the reaction N(6)-malonyl-L-lysyl-[protein] + NAD(+) + H2O = 2''-O-malonyl-ADP-D-ribose + nicotinamide + L-lysyl-[protein]. The catalysed reaction is N(6)-succinyl-L-lysyl-[protein] + NAD(+) + H2O = 2''-O-succinyl-ADP-D-ribose + nicotinamide + L-lysyl-[protein]. The enzyme catalyses N(6)-glutaryl-L-lysyl-[protein] + NAD(+) + H2O = 2''-O-glutaryl-ADP-D-ribose + nicotinamide + L-lysyl-[protein]. Functionally, NAD-dependent lysine demalonylase, desuccinylase and deglutarylase that specifically removes malonyl, succinyl and glutaryl groups on target proteins. Activates CPS1 and contributes to the regulation of blood ammonia levels during prolonged fasting: acts by mediating desuccinylation and deglutarylation of CPS1, thereby increasing CPS1 activity in response to elevated NAD levels during fasting. Activates SOD1 by mediating its desuccinylation, leading to reduced reactive oxygen species. Activates SHMT2 by mediating its desuccinylation. Modulates ketogenesis through the desuccinylation and activation of HMGCS2. Has weak NAD-dependent protein deacetylase activity; however this activity may not be physiologically relevant in vivo. Can deacetylate cytochrome c (CYCS) and a number of other proteins in vitro such as UOX. The protein is NAD-dependent protein deacylase sirtuin-5, mitochondrial of Monodelphis domestica (Gray short-tailed opossum).